The following is a 171-amino-acid chain: Large ribosomal subunit protein uL10 (171 aa).

The protein belongs to the universal ribosomal protein uL10 family. Part of the ribosomal stalk of the 50S ribosomal subunit. The N-terminus interacts with L11 and the large rRNA to form the base of the stalk. The C-terminus forms an elongated spine to which L12 dimers bind in a sequential fashion forming a multimeric L10(L12)X complex.

Its function is as follows. Forms part of the ribosomal stalk, playing a central role in the interaction of the ribosome with GTP-bound translation factors. In Lactococcus lactis subsp. cremoris (strain SK11), this protein is Large ribosomal subunit protein uL10.